A 446-amino-acid chain; its full sequence is Inward rectifier potassium channel 4 (446 aa).

The Cytoplasmic portion of the chain corresponds to 1–55; it reads MHGHSRNGQAHVPRRKRRNRFVKKNGQCNVYFANLSNKSQRYMADIFTTCVDTRW. The helical transmembrane segment at 56 to 80 threads the bilayer; it reads RYMLMIFSAAFLVSWLFFGLLFWCI. Residues 81 to 120 lie on the Extracellular side of the membrane; that stretch reads AFFHGDLEPSPSGPTAGGPGGNGGGAAPTAAKPCIMHVNG. The segment at 91–111 is val/Gly/Ala/Pro stretch; it reads PSGPTAGGPGGNGGGAAPTAA. Positions 121–132 form an intramembrane region, helical; Pore-forming; it reads FLGAFLFSVETQ. Positions 133–139 form an intramembrane region, pore-forming; the sequence is TTIGYGF. The Selectivity filter motif lies at 134–139; the sequence is TIGYGF. Residues 140–148 lie on the Extracellular side of the membrane; the sequence is RCVTEECPL. The chain crosses the membrane as a helical span at residues 149 to 170; that stretch reads AVIAVVVQSIVGCVIDSFMIGT. Residues 171-446 lie on the Cytoplasmic side of the membrane; it reads IMAKMPRPKK…NISYRRESAI (276 aa). Positions 444–446 match the PDZ-binding motif; it reads SAI.

The protein belongs to the inward rectifier-type potassium channel (TC 1.A.2.1) family. KCNJ4 subfamily. As to quaternary structure, homomultimeric and heteromultimeric association with KCNJ2 and KCNJ12. Interacts with DLG2 and DLG4. Associates, via its PDZ-recognition domain, with a complex containing LIN7A, LIN7B, LIN7C, DLG1, CASK and APBA1. Interacts with TAX1BP3. TAX1BP3 competes with LIN7 family members for KCNJ4 binding. As to expression, detected in kidney distal convoluted tubules (at protein level). Widely expressed throughout the brain. Also found in some peripheral tissues.

The protein resides in the cell membrane. Its subcellular location is the cytoplasmic vesicle membrane. The protein localises to the postsynaptic cell membrane. It carries out the reaction K(+)(in) = K(+)(out). Functionally, inward rectifier potassium channels are characterized by a greater tendency to allow potassium to flow into the cell rather than out of it. Their voltage dependence is regulated by the concentration of extracellular potassium; as external potassium is raised, the voltage range of the channel opening shifts to more positive voltages. The inward rectification is mainly due to the blockage of outward current by internal magnesium. Can be blocked by extracellular barium and cesium. The sequence is that of Inward rectifier potassium channel 4 (Kcnj4) from Rattus norvegicus (Rat).